Here is a 71-residue protein sequence, read N- to C-terminus: Pseudonajatoxin b (71 aa).

Intrachain disulfides connect Cys3–Cys21, Cys14–Cys42, Cys27–Cys31, Cys46–Cys58, and Cys59–Cys64.

This sequence belongs to the three-finger toxin family. Long-chain subfamily. Type II alpha-neurotoxin sub-subfamily. As to expression, expressed by the venom gland.

It is found in the secreted. Functionally, binds with high affinity to muscular (alpha-1/CHRNA1) and neuronal (alpha-7/CHRNA7) nicotinic acetylcholine receptor (nAChR) and inhibits acetylcholine from binding to the receptor, thereby impairing neuromuscular and neuronal transmission. The chain is Pseudonajatoxin b from Pseudonaja textilis (Eastern brown snake).